The primary structure comprises 184 residues: ATP synthase subunit b, chloroplastic (184 aa).

Residues 27-49 (LATNLINLSVVLGVLIFFGKGVL) traverse the membrane as a helical segment.

Belongs to the ATPase B chain family. F-type ATPases have 2 components, F(1) - the catalytic core - and F(0) - the membrane proton channel. F(1) has five subunits: alpha(3), beta(3), gamma(1), delta(1), epsilon(1). F(0) has four main subunits: a(1), b(1), b'(1) and c(10-14). The alpha and beta chains form an alternating ring which encloses part of the gamma chain. F(1) is attached to F(0) by a central stalk formed by the gamma and epsilon chains, while a peripheral stalk is formed by the delta, b and b' chains.

It is found in the plastid. Its subcellular location is the chloroplast thylakoid membrane. F(1)F(0) ATP synthase produces ATP from ADP in the presence of a proton or sodium gradient. F-type ATPases consist of two structural domains, F(1) containing the extramembraneous catalytic core and F(0) containing the membrane proton channel, linked together by a central stalk and a peripheral stalk. During catalysis, ATP synthesis in the catalytic domain of F(1) is coupled via a rotary mechanism of the central stalk subunits to proton translocation. Functionally, component of the F(0) channel, it forms part of the peripheral stalk, linking F(1) to F(0). The sequence is that of ATP synthase subunit b, chloroplastic from Liriodendron tulipifera (Tuliptree).